Here is a 381-residue protein sequence, read N- to C-terminus: MAQDFNVTPWEVKGKVDYDKLIVQFGTQKITSELKEKIKSIINDELHVMLRRDVFFSHRDLDLVLKDYQDGKGFFLYTGRAPSLGMHIGHLIPFIFTKWLQDKFNVNLYIEITDDEKFMRNPEYTLDQTRQWAYDNILDIIAVGFNPDKTFIFQDTEYIRNMYPIAIKIAKKLTFSEVRATFGLDTSSNIGIIWYPALQIAPTMFEKRRCLIPAGIDQDPYWRLQRDIAESLGYYKAAQIHSKFLPPLTGPEGKMSSSQPETAIYLTDDPKTVERKIMKYAFSGGQPTIELHRKYGGNPDIDVSFQWLYMFFEPDDNKIKKIEEDYRSGALLTGELKQILIEKLNDFLEEHRQKREEAKKLVNVFKYDGELAREMWRKIHE.

A 'HIGH' region motif is present at residues 82–90 (PSLGMHIGH). The 'KMSKS' region signature appears at 254–258 (KMSSS).

Belongs to the class-I aminoacyl-tRNA synthetase family.

It is found in the cytoplasm. It catalyses the reaction tRNA(Trp) + L-tryptophan + ATP = L-tryptophyl-tRNA(Trp) + AMP + diphosphate + H(+). The chain is Tryptophan--tRNA ligase from Sulfurisphaera tokodaii (strain DSM 16993 / JCM 10545 / NBRC 100140 / 7) (Sulfolobus tokodaii).